Here is a 64-residue protein sequence, read N- to C-terminus: Alpha-conotoxin CnIC (64 aa).

A signal peptide spans 1–21; it reads MGMRMMFTVFLLVVLTTTVVS. The propeptide occupies 22–47; it reads FPSDSASDVRDDEAKDERSDMYKSKR. The residue at position 48 (Asn48) is a Deamidated asparagine; in CnIH; partial. Disulfide bonds link Cys51–Cys56 and Cys52–Cys62. A Cysteine amide modification is found at Cys62.

This sequence belongs to the conotoxin A superfamily. As to expression, expressed by the venom duct.

Its subcellular location is the secreted. Its function is as follows. Alpha-conotoxins act on postsynaptic membranes, they bind to the nicotinic acetylcholine receptors (nAChR) and thus inhibit them. The sequence is that of Alpha-conotoxin CnIC from Conus consors (Singed cone).